Reading from the N-terminus, the 468-residue chain is MSTTLYDKIFQAHIVDEIGDDALLYIDRHLIHEVTSPQAFDGLAQKGRKVRRPDLTFATMDHSISTRSLAIDACGPANKLQLQTLADNCEANGIQLFPVGHQKQGIVHVMGPELGLIKPGMTVVCGDSHTATHGAFGALAFGIGTSQVEHVFATQTLKQSKGKCMQVKVNGARPLGVTAKDIILAIIGKIGHAGATGCVIEYCGDTIEGLSMEERMTVCNMSIEAGAKAGLIAPDQTTFDYLAGREYAPKGADWDAAVAYWKTLKSDTDAKFDIVVELAATDIAPQVTWGTNPGQVIGVNQPIPAPEDFSDPIDRDSAVKALKYMDIQAGQKLADLTVNHVFIGSCTNGRIEDMRAAAAIAKQGKVAENVTAIVVPGSVAVKAQAEAEQLDKIFLDAGFEWRLPGCSMCLGMNDDILSQGDRCASTSNRNFEGRQGRGARTHLVSPAMAAAAALAGRFADTRDFIAND.

Residues cysteine 346, cysteine 406, and cysteine 409 each contribute to the [4Fe-4S] cluster site.

It belongs to the aconitase/IPM isomerase family. LeuC type 1 subfamily. Heterodimer of LeuC and LeuD. The cofactor is [4Fe-4S] cluster.

It catalyses the reaction (2R,3S)-3-isopropylmalate = (2S)-2-isopropylmalate. It participates in amino-acid biosynthesis; L-leucine biosynthesis; L-leucine from 3-methyl-2-oxobutanoate: step 2/4. In terms of biological role, catalyzes the isomerization between 2-isopropylmalate and 3-isopropylmalate, via the formation of 2-isopropylmaleate. This Pseudoalteromonas atlantica (strain T6c / ATCC BAA-1087) protein is 3-isopropylmalate dehydratase large subunit.